The primary structure comprises 63 residues: MRCFPVFIILLLLMASAPSFDARPKTEDDVPLSSFRDNLKRTLRTLLDPRRCCYETPGCCVIG.

The N-terminal stretch at 1–22 (MRCFPVFIILLLLMASAPSFDA) is a signal peptide. Residues 23-49 (RPKTEDDVPLSSFRDNLKRTLRTLLDP) constitute a propeptide that is removed on maturation. The residue at position 62 (isoleucine 62) is an Isoleucine amide.

The protein belongs to the conotoxin T superfamily. Post-translationally, contains 2 disulfide bonds that can be either 'C1-C3, C2-C4' or 'C1-C4, C2-C3', since these disulfide connectivities have been observed for conotoxins with cysteine framework V (for examples, see AC P0DQQ7 and AC P81755). In terms of tissue distribution, expressed by the venom duct.

Its subcellular location is the secreted. The protein is Conotoxin Pn-B01411 of Conus pennaceus (Feathered cone).